The chain runs to 129 residues: MKYFVVALALVAAFACIAESKPAESEHELAEVEEENELADLEDAVWLEHLADLSDLEEARGFFGNTWKKIKGKADKIMLKKAVKIMVKKEGISKEEAQAKVDAMSKKQIRLYVLKYYGKKALQKASEKL.

A signal peptide spans Met-1–Ser-20. The propeptide occupies Lys-21–Arg-60. Positions Glu-57–Arg-60 match the Processing quadruplet motif motif.

Cleavage of the propeptide depends on the processing quadruplet motif (XXXR, with at least one of X being E). As to expression, expressed by the venom gland.

It is found in the secreted. Its function is as follows. Insecticidal, cytolytic and antimicrobial peptide. Forms voltage-dependent, ion-permeable channels in membranes. At high concentration causes cell membrane lysis. This is M-zodatoxin-Lt8c (cit 1-3) from Lachesana tarabaevi (Spider).